The sequence spans 643 residues: Phosphomethylpyrimidine synthase (643 aa).

Substrate is bound by residues Asn-248, Met-277, Tyr-306, His-342, 362–364 (SRG), 403–406 (DGLR), and Glu-442. Residue His-446 coordinates Zn(2+). Residue Tyr-469 participates in substrate binding. His-510 is a Zn(2+) binding site. 3 residues coordinate [4Fe-4S] cluster: Cys-590, Cys-593, and Cys-598.

Belongs to the ThiC family. As to quaternary structure, homodimer. [4Fe-4S] cluster is required as a cofactor.

The enzyme catalyses 5-amino-1-(5-phospho-beta-D-ribosyl)imidazole + S-adenosyl-L-methionine = 4-amino-2-methyl-5-(phosphooxymethyl)pyrimidine + CO + 5'-deoxyadenosine + formate + L-methionine + 3 H(+). It functions in the pathway cofactor biosynthesis; thiamine diphosphate biosynthesis. In terms of biological role, catalyzes the synthesis of the hydroxymethylpyrimidine phosphate (HMP-P) moiety of thiamine from aminoimidazole ribotide (AIR) in a radical S-adenosyl-L-methionine (SAM)-dependent reaction. This is Phosphomethylpyrimidine synthase from Burkholderia ambifaria (strain ATCC BAA-244 / DSM 16087 / CCUG 44356 / LMG 19182 / AMMD) (Burkholderia cepacia (strain AMMD)).